Consider the following 376-residue polypeptide: Serpin B6 (376 aa).

N-acetylmethionine is present on methionine 1. Position 151 is a phosphoserine (serine 151). Residue lysine 195 is modified to N6-acetyllysine.

The protein belongs to the serpin family. Ov-serpin subfamily. In terms of assembly, forms a complex with the monomeric form of beta-tryptase.

The protein resides in the cytoplasm. Functionally, inhibitor of cathepsin G, kallikrein-8 and thrombin. May play an important role in the inner ear in the protection against leakage of lysosomal content during stress. May be involved in the regulation of serine proteinases present in the brain or extravasated from the blood. The sequence is that of Serpin B6 (SERPINB6) from Macaca fascicularis (Crab-eating macaque).